A 279-amino-acid polypeptide reads, in one-letter code: uncharacterized protein (279 aa).

Low complexity-rich tracts occupy residues 1-25 (MNEN…NNNN), 86-151 (PSQS…NGNN), and 232-250 (NKNN…DDNN). Disordered regions lie at residues 1–27 (MNEN…NNIK), 83–153 (NLFP…NNID), and 213–260 (QSVN…KVKS).

This is an uncharacterized protein from Dictyostelium discoideum (Social amoeba).